A 359-amino-acid chain; its full sequence is Bergaptol O-methyltransferase (359 aa).

His-126 is a bergaptol binding site. Ser-179, Gly-203, Asp-226, Asp-246, and Lys-260 together coordinate S-adenosyl-L-homocysteine. Residue His-264 participates in bergaptol binding. His-264 (proton acceptor) is an active-site residue.

The protein belongs to the class I-like SAM-binding methyltransferase superfamily. Cation-independent O-methyltransferase family. COMT subfamily. As to quaternary structure, homodimer. As to expression, mostly expressed in roots and, to a lower extent, in stems and leaves.

It is found in the cytoplasm. It catalyses the reaction bergaptol + S-adenosyl-L-methionine = bergapten + S-adenosyl-L-homocysteine. It functions in the pathway aromatic compound metabolism. The protein operates within secondary metabolite biosynthesis. O-methyltransferase involved in the biosynthesis of furocoumarins natural products such as bergapten, a photosensitizer used for medical purpose such as treating psoriasis and vitiligo or facilitating resistance to microbial infection and other stresses. Catalyzes specifically the methylation of bergaptol. Not active on xanthotol, isoscopoletin, scopoletin and esculetin. This is Bergaptol O-methyltransferase from Kitagawia praeruptora (Peucedanum praeruptorum).